The chain runs to 1261 residues: Rho GTPase-activating protein 29 (1261 aa).

4 positions are modified to phosphoserine: serine 171, serine 176, serine 179, and serine 190. The region spanning 192-462 (LELDNVLLKN…SAKLYDPGQE (271 aa)) is the F-BAR domain. Residues 296–418 (RKNEMEKQRK…EILAQLRTLV (123 aa)) adopt a coiled-coil conformation. The tract at residues 481–501 (NVNKHLNSSQPSGFGPANSLE) is disordered. Phosphoserine occurs at positions 499, 519, and 552. The segment covering 541-559 (SESTGGSSESRSLDSESIS) has biased composition (low complexity). Residues 541 to 600 (SESTGGSSESRSLDSESISPGDFHRKLPRTPSSGTMSSADDLDEREPPSPSETGPNSLGT) form a disordered region. Residues 612–657 (THKFRKLRSPTKCRDCEGIVVFQGVECEECLLVCHRKCLENLVIIC) form a Phorbol-ester/DAG-type zinc finger. One can recognise a Rho-GAP domain in the interval 671-886 (AEFTQVAKKE…FLITYSQKIF (216 aa)). Phosphoserine is present on residues serine 913 and serine 949. Positions 981-1011 (SASQKIEDGKTPKPLSLKSDRSTNNVERHTP) are disordered. Positions 998–1010 (KSDRSTNNVERHT) are enriched in basic and acidic residues. Residues serine 1019, serine 1144, and serine 1146 each carry the phosphoserine modification. Disordered regions lie at residues 1117 to 1153 (HSIN…APVR) and 1178 to 1238 (GNEE…VNPM). Over residues 1133 to 1144 (RSVREASERRSS) the composition is skewed to basic and acidic residues. Positions 1258-1261 (PQFV) are interaction with PTPN13/PTPL1.

Interacts with PTPN13/PTPL1. Interacts with RAP2A via its coiled coil domain. Interacts with RASIP1. In terms of tissue distribution, widely expressed. Highly expressed in skeletal muscle and heart. Expressed at intermediate level in placenta, liver and pancreas. Weakly expressed in brain, lung and kidney.

In terms of biological role, GTPase activator for the Rho-type GTPases by converting them to an inactive GDP-bound state. Has strong activity toward RHOA, and weaker activity toward RAC1 and CDC42. May act as a specific effector of RAP2A to regulate Rho. In concert with RASIP1, suppresses RhoA signaling and dampens ROCK and MYH9 activities in endothelial cells and plays an essential role in blood vessel tubulogenesis. The chain is Rho GTPase-activating protein 29 (ARHGAP29) from Homo sapiens (Human).